We begin with the raw amino-acid sequence, 71 residues long: Small ribosomal subunit protein bS21 (71 aa).

Residues 39–71 (EKPTQERKRKAAAAVKRQLRRSSRDVTKRQRLY) form a disordered region. Residues 45–59 (RKRKAAAAVKRQLRR) are compositionally biased toward basic residues. Residues 60-71 (SSRDVTKRQRLY) are compositionally biased toward basic and acidic residues.

This sequence belongs to the bacterial ribosomal protein bS21 family.

In Stenotrophomonas maltophilia (strain K279a), this protein is Small ribosomal subunit protein bS21.